A 1042-amino-acid polypeptide reads, in one-letter code: Serine/threonine-protein kinase LATS2 (1042 aa).

Positions 23–44 (REGLKQPSKASTQGLLVGPNSD) are disordered. A compositionally biased stretch (polar residues) spans 30-44 (SKASTQGLLVGPNSD). At Ser-82 the chain carries Phosphoserine; by AURKA. One can recognise a UBA domain in the interval 97 to 138 (EVNRQMLQELVNAGCDQEMAGRALKQTGSRSIEAALEYISKM). An interaction with ubiquitinated AMOTL2 region spans residues 100–140 (RQMLQELVNAGCDQEMAGRALKQTGSRSIEAALEYISKMGY). Residues 237 to 282 (HFPGTHYGRGHLLSEQPGYGVQRSSSFQNKTPPDAYSSMAKAQGGP) form a disordered region. The span at 258-267 (QRSSSFQNKT) shows a compositional bias: polar residues. Thr-267 is subject to Phosphothreonine. The residue at position 362 (Ser-362) is a Phosphoserine. 3 disordered regions span residues 378–399 (RAGP…LPAP), 442–481 (PATE…HLLL), and 501–550 (QSLR…KRES). The PPxY motif motif lies at 472 to 475 (PPPY). Over residues 507–530 (TEQDRSDKSHKGAKGDKAGRDKKQ) the composition is skewed to basic and acidic residues. At Ser-534 the chain carries Phosphoserine. Over residues 541-550 (NSRDEEKRES) the composition is skewed to basic and acidic residues. Residues 626–931 (FVKIKTLGIG…ADDLKAHPFF (306 aa)) form the Protein kinase domain. ATP contacts are provided by residues 632–640 (LGIGAFGEV) and Lys-655. Residue Asp-749 is the Proton acceptor of the active site. In terms of domain architecture, AGC-kinase C-terminal spans 932 to 1010 (NTIDFSRDIR…RRFFDDNGYP (79 aa)). Thr-999 carries the post-translational modification Phosphothreonine. Positions 1014-1042 (PKPSEPAESADPGDADLEGAAEGCQPVYV) are disordered.

The protein belongs to the protein kinase superfamily. AGC Ser/Thr protein kinase family. As to quaternary structure, interacts with and is phosphorylated by AURKA. Binds to AR. Interacts with AJUBA during mitosis and this complex regulates organization of the spindle apparatus through recruitment of gamma-tubulin to the centrosome. Interacts (via PPxY motif) with YAP1 (via WW domains). Interacts with MOB1A and MOB1B. Interacts with LIMD1, WTIP and AJUBA. Interacts with SNAI1. Interacts with WWC1, WWC2 and WWC3 (via their WW domains). Interacts (via UBA domain) with ubiquitinated AMOTL2; the interaction promotes LATS2 phosphorylation of YAP1. The cofactor is Mg(2+). In terms of processing, autophosphorylated and phosphorylated during M-phase and the G1/S-phase of the cell cycle. Phosphorylated and activated by STK3/MST2. Phosphorylated by MAP4Ks; in parallel to STK3/MST2 and resulting to its activation. Phosphorylation by NUAK2 may regulate its activity in phosphorylation and inactivation YAP1. Expressed at high levels in ovary and testis and at lower levels in all other tissues examined.

It is found in the cytoplasm. The protein resides in the cytoskeleton. Its subcellular location is the microtubule organizing center. It localises to the centrosome. The protein localises to the spindle pole. It is found in the nucleus. The catalysed reaction is L-seryl-[protein] + ATP = O-phospho-L-seryl-[protein] + ADP + H(+). It catalyses the reaction L-threonyl-[protein] + ATP = O-phospho-L-threonyl-[protein] + ADP + H(+). Functionally, negative regulator of YAP1 in the Hippo signaling pathway that plays a pivotal role in organ size control and tumor suppression by restricting proliferation and promoting apoptosis. The core of this pathway is composed of a kinase cascade wherein STK3/MST2 and STK4/MST1, in complex with its regulatory protein SAV1, phosphorylates and activates LATS1/2 in complex with its regulatory protein MOB1, which in turn phosphorylates and inactivates YAP1 oncoprotein and WWTR1/TAZ. Phosphorylation of YAP1 by LATS2 inhibits its translocation into the nucleus to regulate cellular genes important for cell proliferation, cell death, and cell migration. Also phosphorylates YAP1 in response to cell contact inhibition-driven WWP1 ubiquitination of AMOTL2, which results in LATS2 activation. Acts as a tumor suppressor which plays a critical role in centrosome duplication, maintenance of mitotic fidelity and genomic stability. Negatively regulates G1/S transition by down-regulating cyclin E/CDK2 kinase activity. Negative regulator of the androgen receptor. Phosphorylates SNAI1 in the nucleus leading to its nuclear retention and stabilization, which enhances its epithelial-mesenchymal transition and tumor cell invasion/migration activities. This tumor-promoting activity is independent of its effects upon YAP1 or WWTR1/TAZ. Acts as an activator of the NLRP3 inflammasome by mediating phosphorylation of 'Ser-265' of NLRP3 following NLRP3 palmitoylation, promoting NLRP3 activation by NEK7. This is Serine/threonine-protein kinase LATS2 from Mus musculus (Mouse).